A 175-amino-acid chain; its full sequence is ATP-dependent protease subunit HslV (175 aa).

T2 is an active-site residue. 3 residues coordinate Na(+): G158, C161, and T164.

Belongs to the peptidase T1B family. HslV subfamily. As to quaternary structure, a double ring-shaped homohexamer of HslV is capped on each side by a ring-shaped HslU homohexamer. The assembly of the HslU/HslV complex is dependent on binding of ATP.

The protein resides in the cytoplasm. It catalyses the reaction ATP-dependent cleavage of peptide bonds with broad specificity.. Its activity is regulated as follows. Allosterically activated by HslU binding. Functionally, protease subunit of a proteasome-like degradation complex believed to be a general protein degrading machinery. The chain is ATP-dependent protease subunit HslV from Histophilus somni (strain 129Pt) (Haemophilus somnus).